We begin with the raw amino-acid sequence, 368 residues long: Chorismate synthase (368 aa).

Residue arginine 46 coordinates NADP(+). Residues 123-125, 240-241, glycine 285, 300-304, and arginine 326 each bind FMN; these read RSS, NA, and KPTPT.

The protein belongs to the chorismate synthase family. As to quaternary structure, homotetramer. FMNH2 serves as cofactor.

It carries out the reaction 5-O-(1-carboxyvinyl)-3-phosphoshikimate = chorismate + phosphate. It participates in metabolic intermediate biosynthesis; chorismate biosynthesis; chorismate from D-erythrose 4-phosphate and phosphoenolpyruvate: step 7/7. In terms of biological role, catalyzes the anti-1,4-elimination of the C-3 phosphate and the C-6 proR hydrogen from 5-enolpyruvylshikimate-3-phosphate (EPSP) to yield chorismate, which is the branch point compound that serves as the starting substrate for the three terminal pathways of aromatic amino acid biosynthesis. This reaction introduces a second double bond into the aromatic ring system. This Porphyromonas gingivalis (strain ATCC BAA-308 / W83) protein is Chorismate synthase.